Here is a 921-residue protein sequence, read N- to C-terminus: Probable dipeptidyl-aminopeptidase B (921 aa).

Residues 1–33 (MAGHTEENAQLLSTEQESVSRHSSDSAASTAST) form a disordered region. Residues 1-109 (MAGHTEENAQ…NKSVDKKLRK (109 aa)) are Cytoplasmic-facing. Over residues 8 to 17 (NAQLLSTEQE) the composition is skewed to polar residues. Residues 110 to 130 (LIWIVGGVFIGAWVLALFIFL) form a helical; Signal-anchor for type II membrane protein membrane-spanning segment. The Vacuolar segment spans residues 131-921 (GKQAYKHSSE…VPLQIDAAKV (791 aa)). An N-linked (GlcNAc...) asparagine glycan is attached at N362. S768 (charge relay system) is an active-site residue. N-linked (GlcNAc...) asparagine glycosylation is present at N822. Active-site charge relay system residues include D845 and H878.

This sequence belongs to the peptidase S9B family.

It localises to the vacuole membrane. The enzyme catalyses Release of an N-terminal dipeptide, Xaa-Yaa-|-Zaa-, from a polypeptide, preferentially when Yaa is Pro, provided Zaa is neither Pro nor hydroxyproline.. Functionally, type IV dipeptidyl-peptidase which removes N-terminal dipeptides sequentially from polypeptides having unsubstituted N-termini provided that the penultimate residue is proline. This chain is Probable dipeptidyl-aminopeptidase B (dapB), found in Sclerotinia sclerotiorum (strain ATCC 18683 / 1980 / Ss-1) (White mold).